The chain runs to 60 residues: Large ribosomal subunit protein uL30 (60 aa).

It belongs to the universal ribosomal protein uL30 family. Part of the 50S ribosomal subunit.

This is Large ribosomal subunit protein uL30 from Pseudoalteromonas translucida (strain TAC 125).